The following is a 205-amino-acid chain: Imidazole glycerol phosphate synthase subunit HisH (205 aa).

A Glutamine amidotransferase type-1 domain is found at 1–205 (MIALVDYGGG…FFKMALGDKK (205 aa)). Cys-79 acts as the Nucleophile in catalysis. Residues His-181 and Glu-183 contribute to the active site.

As to quaternary structure, heterodimer of HisH and HisF.

The protein resides in the cytoplasm. The catalysed reaction is 5-[(5-phospho-1-deoxy-D-ribulos-1-ylimino)methylamino]-1-(5-phospho-beta-D-ribosyl)imidazole-4-carboxamide + L-glutamine = D-erythro-1-(imidazol-4-yl)glycerol 3-phosphate + 5-amino-1-(5-phospho-beta-D-ribosyl)imidazole-4-carboxamide + L-glutamate + H(+). It catalyses the reaction L-glutamine + H2O = L-glutamate + NH4(+). The protein operates within amino-acid biosynthesis; L-histidine biosynthesis; L-histidine from 5-phospho-alpha-D-ribose 1-diphosphate: step 5/9. Its function is as follows. IGPS catalyzes the conversion of PRFAR and glutamine to IGP, AICAR and glutamate. The HisH subunit catalyzes the hydrolysis of glutamine to glutamate and ammonia as part of the synthesis of IGP and AICAR. The resulting ammonia molecule is channeled to the active site of HisF. The chain is Imidazole glycerol phosphate synthase subunit HisH from Dehalococcoides mccartyi (strain ATCC BAA-2266 / KCTC 15142 / 195) (Dehalococcoides ethenogenes (strain 195)).